A 103-amino-acid chain; its full sequence is uncharacterized protein (103 aa).

This is an uncharacterized protein from Escherichia coli (strain UTI89 / UPEC).